A 482-amino-acid polypeptide reads, in one-letter code: tRNA sulfurtransferase (482 aa).

A THUMP domain is found at 61 to 165 (LAIRDALTRI…DDRLLLIKGR (105 aa)). ATP contacts are provided by residues 183–184 (LI), K265, G287, and Q296. A disulfide bridge connects residues C344 and C456. The region spanning 404–482 (FGPNDVILDI…GFNNVKVYRP (79 aa)) is the Rhodanese domain. The Cysteine persulfide intermediate role is filled by C456.

This sequence belongs to the ThiI family.

The protein localises to the cytoplasm. The enzyme catalyses [ThiI sulfur-carrier protein]-S-sulfanyl-L-cysteine + a uridine in tRNA + 2 reduced [2Fe-2S]-[ferredoxin] + ATP + H(+) = [ThiI sulfur-carrier protein]-L-cysteine + a 4-thiouridine in tRNA + 2 oxidized [2Fe-2S]-[ferredoxin] + AMP + diphosphate. The catalysed reaction is [ThiS sulfur-carrier protein]-C-terminal Gly-Gly-AMP + S-sulfanyl-L-cysteinyl-[cysteine desulfurase] + AH2 = [ThiS sulfur-carrier protein]-C-terminal-Gly-aminoethanethioate + L-cysteinyl-[cysteine desulfurase] + A + AMP + 2 H(+). It participates in cofactor biosynthesis; thiamine diphosphate biosynthesis. Catalyzes the ATP-dependent transfer of a sulfur to tRNA to produce 4-thiouridine in position 8 of tRNAs, which functions as a near-UV photosensor. Also catalyzes the transfer of sulfur to the sulfur carrier protein ThiS, forming ThiS-thiocarboxylate. This is a step in the synthesis of thiazole, in the thiamine biosynthesis pathway. The sulfur is donated as persulfide by IscS. The protein is tRNA sulfurtransferase of Escherichia coli (strain ATCC 8739 / DSM 1576 / NBRC 3972 / NCIMB 8545 / WDCM 00012 / Crooks).